The primary structure comprises 1088 residues: Pathogenesis-related homeodomain protein (1088 aa).

Tandem repeats lie at residues 140-152 (INMG…PEEV), 173-199 (NSYQ…RSDD), 205-239 (GLVE…KVQT), 240-274 (GLEQ…KVQN), 283-295 (INME…PEQV), 316-342 (NSDQ…QSDD), 348-382 (GFKE…KVQT), and 383-417 (GLEQ…KVQD). The tract at residues 140–295 (INMGQKETMP…EQKETIPEQV (156 aa)) is 2 X 13 AA repeats. The tract at residues 173 to 342 (NSYQSGLPPE…HAQFGHQSDD (170 aa)) is 2 X 27 AA approximate repeats. The interval 205-274 (GLVELVIGQK…SRGRPRKVQN (70 aa)) is 2 X 35 AA approximate tandem repeats (type C). Residues 220 to 282 (PSQLVETGKR…QNSPTSFLEN (63 aa)) form a disordered region. DNA-binding regions (a.T hook) lie at residues 226-236 (TGKRGRGRPRK) and 261-271 (TGKRSRGRPRK). The span at 272 to 282 (VQNSPTSFLEN) shows a compositional bias: polar residues. The span at 303-320 (SLTIPTDNQSRTYNSDQS) shows a compositional bias: polar residues. 2 disordered regions span residues 303-343 (SLTI…SDDT) and 363-484 (PSQL…RMEE). Residues 348-417 (GFKELVIGQE…SRGRPRKVQD (70 aa)) form a 2 X 35 AA approximate tandem repeats (type C) region. DNA-binding regions (a.T hook) lie at residues 369-379 (AGKRGRGRPRK) and 404-414 (TGKRSRGRPRK). A PHD-type zinc finger spans residues 578 to 635 (DIFCAKCGSKDVTLSNDIILCDGACDRGFHQFCLDPPLLKEYIPPDDEGWLCPGCECK). Disordered regions lie at residues 667-810 (AASG…PLYP) and 851-901 (EEYG…ARES). The 4-1 repeat unit spans residues 678-693 (GLPSDDSEDDDYDPGG). The tract at residues 678–744 (GLPSDDSEDD…SEDDEYDPSG (67 aa)) is 2 X 16 AA Asp/Glu-rich (acidic) repeats. A compositionally biased stretch (acidic residues) spans 705–718 (SSTDESDYQSESDD). The 4-2 repeat unit spans residues 729–744 (GLPSDDSEDDEYDPSG). 2 stretches are compositionally biased toward basic and acidic residues: residues 788–802 (DHVR…HPEQ) and 874–901 (NNSD…ARES). The homeobox DNA-binding region spans 935 to 994 (KSTSKTLHGEHATQRLLQSFKENQYPQRAVKESLAAELALSVRQVSNWFNNRRWSFRHSS).

This sequence belongs to the PHD-associated homeobox family.

It is found in the nucleus. Its function is as follows. Specifically binds to the fungal elicitor-responsive DNA element, 5'-CTAATTGTTTA-3', of the gene PR2 promoter. The sequence is that of Pathogenesis-related homeodomain protein (PRH) from Petroselinum crispum (Parsley).